The chain runs to 464 residues: Argininosuccinate lyase (464 aa).

Belongs to the lyase 1 family. Argininosuccinate lyase subfamily.

It localises to the cytoplasm. The enzyme catalyses 2-(N(omega)-L-arginino)succinate = fumarate + L-arginine. Its pathway is amino-acid biosynthesis; L-arginine biosynthesis; L-arginine from L-ornithine and carbamoyl phosphate: step 3/3. This Pseudomonas putida (strain W619) protein is Argininosuccinate lyase.